Reading from the N-terminus, the 476-residue chain is Glutamate--tRNA ligase 1 (476 aa).

A 'HIGH' region motif is present at residues 9-19 (PSPTGFLHIGG). The 'KMSKS' region signature appears at 238–242 (KLSKR). Lys241 lines the ATP pocket.

The protein belongs to the class-I aminoacyl-tRNA synthetase family. Glutamate--tRNA ligase type 1 subfamily. In terms of assembly, monomer.

It localises to the cytoplasm. It carries out the reaction tRNA(Glu) + L-glutamate + ATP = L-glutamyl-tRNA(Glu) + AMP + diphosphate. In terms of biological role, catalyzes the attachment of glutamate to tRNA(Glu) in a two-step reaction: glutamate is first activated by ATP to form Glu-AMP and then transferred to the acceptor end of tRNA(Glu). The protein is Glutamate--tRNA ligase 1 of Bartonella tribocorum (strain CIP 105476 / IBS 506).